Consider the following 138-residue polypeptide: uncharacterized protein (138 aa).

2 disordered regions span residues 1–23 and 35–83; these read MPES…MLSE and ASPS…EDPV. Residues 60 to 69 show a composition bias toward acidic residues; the sequence is DEETIPEEDD.

This is an uncharacterized protein from Schizosaccharomyces pombe (strain 972 / ATCC 24843) (Fission yeast).